Consider the following 220-residue polypeptide: Deoxyribose-phosphate aldolase (220 aa).

Asp89 serves as the catalytic Proton donor/acceptor. The active-site Schiff-base intermediate with acetaldehyde is Lys151. Lys180 functions as the Proton donor/acceptor in the catalytic mechanism.

It belongs to the DeoC/FbaB aldolase family. DeoC type 1 subfamily.

The protein localises to the cytoplasm. The catalysed reaction is 2-deoxy-D-ribose 5-phosphate = D-glyceraldehyde 3-phosphate + acetaldehyde. It functions in the pathway carbohydrate degradation; 2-deoxy-D-ribose 1-phosphate degradation; D-glyceraldehyde 3-phosphate and acetaldehyde from 2-deoxy-alpha-D-ribose 1-phosphate: step 2/2. Catalyzes a reversible aldol reaction between acetaldehyde and D-glyceraldehyde 3-phosphate to generate 2-deoxy-D-ribose 5-phosphate. In Streptococcus pneumoniae (strain Hungary19A-6), this protein is Deoxyribose-phosphate aldolase.